We begin with the raw amino-acid sequence, 668 residues long: Transketolase (668 aa).

His28 is a binding site for substrate. Residues His68 and 116–118 (GPL) contribute to the thiamine diphosphate site. Asp157 serves as a coordination point for Mg(2+). Residues Gly158 and Asn187 each contribute to the thiamine diphosphate site. Asn187 and Ile189 together coordinate Mg(2+). Substrate is bound by residues His263, Arg358, and Ser385. His263 contacts thiamine diphosphate. Glu412 serves as the catalytic Proton donor. Phe438 provides a ligand contact to thiamine diphosphate. 4 residues coordinate substrate: His462, Asp470, His474, and Arg521.

It belongs to the transketolase family. As to quaternary structure, homodimer. It depends on Mg(2+) as a cofactor. The cofactor is thiamine diphosphate.

The catalysed reaction is D-sedoheptulose 7-phosphate + D-glyceraldehyde 3-phosphate = aldehydo-D-ribose 5-phosphate + D-xylulose 5-phosphate. Its function is as follows. Catalyzes the transfer of a two-carbon ketol group from a ketose donor to an aldose acceptor, likely via a covalent intermediate with the cofactor thiamine pyrophosphate. Can use L-erythrulose as donor and D-ribose-5-phosphate as acceptor substrates, forming glycolaldehyde and D-sedoheptulose-7-phosphate. For synthetic purposes, is able to use hydroxypyruvate (HPA) as donor substrate, making the reaction irreversible due to the release of carbon dioxide, and various aldehydes as acceptor substrates, which leads to the corresponding ketoses. Thus, using hydroxypyruvate as donor and three different aldehydes as acceptors, i.e. glycolaldehyde, D-glyceraldehyde and butyraldehyde, the enzyme stereoselectively forms the corresponding products L-erythrulose, D-xylulose and (3S)-1,3-dihydroxyhexan-2-one, respectively. The sequence is that of Transketolase from Geobacillus stearothermophilus (Bacillus stearothermophilus).